The sequence spans 128 residues: Large ribosomal subunit protein bL20c (128 aa).

Belongs to the bacterial ribosomal protein bL20 family.

Its subcellular location is the plastid. Its function is as follows. Binds directly to 23S ribosomal RNA and is necessary for the in vitro assembly process of the 50S ribosomal subunit. It is not involved in the protein synthesizing functions of that subunit. This is Large ribosomal subunit protein bL20c (rpl20) from Lathraea clandestina (Purple toothwort).